Here is a 683-residue protein sequence, read N- to C-terminus: Protein hook (683 aa).

One can recognise a Calponin-homology (CH) domain in the interval asparagine 5–alanine 123. Coiled-coil stretches lie at residues glutamate 135–glycine 440 and glutamine 484–valine 594.

The protein belongs to the hook family. In terms of assembly, homodimer. Interacts with microtubules via its N-terminus.

The protein localises to the cytoplasm. The protein resides in the cytoskeleton. It is found in the endosome. It localises to the synapse. In terms of biological role, involved in endocytic trafficking by stabilizing organelles of the endocytic pathway. Probably acts as a cytoskeletal linker protein required to tether endosome vesicles to the cytoskeleton. Involved in modulation of endocytosis at stages required for down-regulation of membrane proteins that control synapse size. Not involved in synaptic vesicle recycling. Required in R7 cells for boss endocytosis into multivesicular bodies (MVBs). Has a role in regulating adult longevity. The protein is Protein hook of Drosophila grimshawi (Hawaiian fruit fly).